The chain runs to 112 residues: uncharacterized protein (112 aa).

This is an uncharacterized protein from Archaeoglobus fulgidus (strain ATCC 49558 / DSM 4304 / JCM 9628 / NBRC 100126 / VC-16).